Consider the following 119-residue polypeptide: Ribosome-binding factor A (119 aa).

This sequence belongs to the RbfA family. Monomer. Binds 30S ribosomal subunits, but not 50S ribosomal subunits or 70S ribosomes.

It is found in the cytoplasm. Functionally, one of several proteins that assist in the late maturation steps of the functional core of the 30S ribosomal subunit. Associates with free 30S ribosomal subunits (but not with 30S subunits that are part of 70S ribosomes or polysomes). Required for efficient processing of 16S rRNA. May interact with the 5'-terminal helix region of 16S rRNA. This is Ribosome-binding factor A from Pseudothermotoga lettingae (strain ATCC BAA-301 / DSM 14385 / NBRC 107922 / TMO) (Thermotoga lettingae).